Consider the following 102-residue polypeptide: UPF0751 protein DSY4013 (102 aa).

This sequence belongs to the UPF0751 family.

This Desulfitobacterium hafniense (strain Y51) protein is UPF0751 protein DSY4013.